Reading from the N-terminus, the 396-residue chain is Elongation factor Tu 2 (396 aa).

The tr-type G domain occupies 10–206 (KPHVNIGTIG…AVDEYIPTPE (197 aa)). Positions 19–26 (GHVDHGKT) are G1. 19 to 26 (GHVDHGKT) serves as a coordination point for GTP. A Mg(2+)-binding site is contributed by threonine 26. The G2 stretch occupies residues 60 to 64 (GITIN). The interval 81 to 84 (DCPG) is G3. Residues 81-85 (DCPGH) and 136-139 (NKVD) each bind GTP. A G4 region spans residues 136–139 (NKVD). A G5 region spans residues 174-176 (SAL).

Belongs to the TRAFAC class translation factor GTPase superfamily. Classic translation factor GTPase family. EF-Tu/EF-1A subfamily. Monomer.

It is found in the cytoplasm. The catalysed reaction is GTP + H2O = GDP + phosphate + H(+). Its function is as follows. GTP hydrolase that promotes the GTP-dependent binding of aminoacyl-tRNA to the A-site of ribosomes during protein biosynthesis. The chain is Elongation factor Tu 2 from Hyphomonas neptunium (strain ATCC 15444).